Here is a 677-residue protein sequence, read N- to C-terminus: Multicopper oxidase GIP1 (677 aa).

The first 23 residues, 1-23, serve as a signal peptide directing secretion; it reads MLTSPRLILLLLAWVFSALVASA. 2 Plastocyanin-like domains span residues 31–150 and 179–379; these read ITWE…IRRK and LVMV…RYKG. The N-linked (GlcNAc...) asparagine glycan is linked to asparagine 76. Residues histidine 80, histidine 82, histidine 130, and histidine 132 each contribute to the Cu cation site. 4 N-linked (GlcNAc...) asparagine glycosylation sites follow: asparagine 228, asparagine 283, asparagine 396, and asparagine 478. The Plastocyanin-like 3 domain maps to 469–588; sequence DEGLVIRTKN…AGGMAIAILD (120 aa). Histidine 503 serves as a coordination point for Cu cation. Asparagine 520 carries N-linked (GlcNAc...) asparagine glycosylation. Residues 629–651 are disordered; that stretch reads PLLAVSPSGGPKKDSGETSASDS.

It belongs to the multicopper oxidase family. As to quaternary structure, might be part of an extracellular enzyme complex composed of GIP1, aurF, aurO and aurS.

Its subcellular location is the secreted. The protein resides in the extracellular space. It functions in the pathway pigment biosynthesis. Its function is as follows. Multicopper oxidase; part of the gene cluster that mediates the biosynthesis of aurofusarin, a red mycelium pigment which is acting as a mycotoxin. The first step is performed by the polyketide synthase which condenses one acetyl-CoA and 6 malonyl-CoA units to form the first intermediate, the cyclic heptaketide and yellow pigment YWA1. The C2 hydroxyl group in the pyrone ring of YWA1 is probably formed during ring closure by an aldol-type cyclization reaction. The dehydratase aurZ then acts as the first tailoring enzyme in the aurofusarin biosynthetic pathway by converting YWA1 to nor-rubrofusarin. Nor-rubrofusarin is then methylated to rubrofusarin by the O-methyltransferase aurJ. Rubrofusarin is then transported across the plasma membrane by the rubrofusarin-specific pump aurT for further enzymatic processing by the extracellular complex composed of GIP1, aurF, aurO and aurS to yield aurofusarin. This Gibberella zeae (strain ATCC MYA-4620 / CBS 123657 / FGSC 9075 / NRRL 31084 / PH-1) (Wheat head blight fungus) protein is Multicopper oxidase GIP1.